The chain runs to 94 residues: Large ribosomal subunit protein uL23 (94 aa).

Belongs to the universal ribosomal protein uL23 family. Part of the 50S ribosomal subunit. Contacts protein L29, and trigger factor when it is bound to the ribosome.

In terms of biological role, one of the early assembly proteins it binds 23S rRNA. One of the proteins that surrounds the polypeptide exit tunnel on the outside of the ribosome. Forms the main docking site for trigger factor binding to the ribosome. This Ligilactobacillus salivarius (strain UCC118) (Lactobacillus salivarius) protein is Large ribosomal subunit protein uL23.